Reading from the N-terminus, the 441-residue chain is tRNA modification GTPase MnmE (441 aa).

Arg21, Glu78, and Lys117 together coordinate (6S)-5-formyl-5,6,7,8-tetrahydrofolate. One can recognise a TrmE-type G domain in the interval 211-363 (GIVMTIVGKP…LENKIVSKVK (153 aa)). Asn221 serves as a coordination point for K(+). Residues 221-226 (NSGKST), 240-246 (TDIPGTT), and 265-268 (DTAG) each bind GTP. Residue Ser225 coordinates Mg(2+). Residues Thr240, Ile242, and Thr245 each contribute to the K(+) site. Thr246 lines the Mg(2+) pocket. Position 441 (Lys441) interacts with (6S)-5-formyl-5,6,7,8-tetrahydrofolate.

It belongs to the TRAFAC class TrmE-Era-EngA-EngB-Septin-like GTPase superfamily. TrmE GTPase family. As to quaternary structure, homodimer. Heterotetramer of two MnmE and two MnmG subunits. It depends on K(+) as a cofactor.

The protein localises to the cytoplasm. Exhibits a very high intrinsic GTPase hydrolysis rate. Involved in the addition of a carboxymethylaminomethyl (cmnm) group at the wobble position (U34) of certain tRNAs, forming tRNA-cmnm(5)s(2)U34. The sequence is that of tRNA modification GTPase MnmE from Thermosipho melanesiensis (strain DSM 12029 / CIP 104789 / BI429).